A 375-amino-acid chain; its full sequence is Metal tolerance protein B (375 aa).

The Cytoplasmic segment spans residues 1 to 57; that stretch reads MELEQICILKPDDEEEMESPSPSKTEENLGVVPLSCAFTRQEHCVSETKEREESTRR. Residues 58 to 78 form a helical membrane-spanning segment; it reads LSSLIFLYLIVMSVQIVGGFK. The Vacuolar portion of the chain corresponds to 79–84; the sequence is ANSLAV. A helical membrane pass occupies residues 85 to 105; that stretch reads MTDAAHLLSDVAGLCVSLLAI. Topologically, residues 106 to 122 are cytoplasmic; sequence KVSSWEANPRNSFGFKR. The chain crosses the membrane as a helical span at residues 123–143; it reads LEVLAAFLSVQLIWLVSGVII. The Vacuolar portion of the chain corresponds to 144 to 160; that stretch reads HEAIQRLLSRSREVNGE. Residues 161–181 form a helical membrane-spanning segment; that stretch reads IMFGISAFGFFMNLVMVLWLG. Positions 182 to 206 are required for zinc-binding; that stretch reads HNHSHHHHDHHHHHHNHKHQHQHHH. The Cytoplasmic portion of the chain corresponds to 182–240; that stretch reads HNHSHHHHDHHHHHHNHKHQHQHHHKEVVAEEEEEEMNPLKGEKSSSKEMNINIQGAYL. Residues 241–261 traverse the membrane as a helical segment; it reads HAMADMIQSLGVMIGGGIIWV. The Vacuolar portion of the chain corresponds to 262-264; it reads KPK. The helical transmembrane segment at 265 to 285 threads the bilayer; the sequence is WVLVDLICTLVFSAFALAATL. The Cytoplasmic portion of the chain corresponds to 286–375; sequence PILKNIFGIL…YHATVQVESE (90 aa).

Belongs to the cation diffusion facilitator (CDF) transporter (TC 2.A.4) family. SLC30A subfamily.

The protein localises to the vacuole membrane. Its function is as follows. Involved in sequestration of excess zinc in the cytoplasm into vacuoles to maintain zinc homeostasis. The chain is Metal tolerance protein B (MTPB) from Arabidopsis thaliana (Mouse-ear cress).